A 1312-amino-acid chain; its full sequence is DNA repair protein RAD50 (1312 aa).

Residues R13, N38, G39, G41, K42, T43, T44, V67, D69, and Q159 each coordinate ATP. T43 serves as a coordination point for Mg(2+). A Mg(2+)-binding site is contributed by Q159. Coiled-coil stretches lie at residues 228 to 359, 401 to 598, and 635 to 673; these read TSKE…QADR, RERQ…AKLN, and SQDF…ITQL. S635 carries the post-translational modification Phosphoserine; by ATM. In terms of domain architecture, Zinc-hook spans 635-734; the sequence is SQDFESDLDR…RRDEMLGLVP (100 aa). Zn(2+)-binding residues include C681 and C684. Phosphothreonine is present on T690. Coiled coils occupy residues 706-734 and 789-1079; these read RLAP…GLVP and LTDV…GRQK. K959 carries the post-translational modification N6-acetyllysine.

Belongs to the SMC family. RAD50 subfamily. As to quaternary structure, component of the MRN complex composed of two heterodimers RAD50 and MRE11 associated with a single NBN. The MRN complexes dimerize on DNA to form joined MRN-MRN oligomers required for DNA double-strand break repair. As part of the MRN complex, interacts with MCM8 and MCM9; the interaction recruits the complex to DNA repair sites. Component of the BASC complex, at least composed of BRCA1, MSH2, MSH6, MLH1, ATM, BLM, RAD50, MRE11 and NBN. Found in a complex with TERF2. Interacts with RINT1. Interacts with BRCA1 via its N-terminal domain. Interacts with DCLRE1C/Artemis. Interacts with MRNIP. Interacts with CYREN (via XLF motif). Interacts with C1QBP and MRE11; interaction takes place in absence of DNA damage to form the MRC (MRE11-RAD50-C1QBP) complex that inhibits the activity of MRE11. In terms of assembly, (Microbial infection) Interacts with herpes simplex virus 1 protein UL12. Zn(2+) is required as a cofactor. In terms of processing, phosphorylation at Ser-635 by ATM in response to DNA damage is required for double-strand break (DSB) repair. As to expression, expressed at very low level in most tissues, except in testis where it is expressed at higher level. Expressed in fibroblasts.

Its subcellular location is the nucleus. It localises to the chromosome. The protein localises to the telomere. It catalyses the reaction ATP + H2O = ADP + phosphate + H(+). Component of the MRN complex, which plays a central role in double-strand break (DSB) repair, DNA recombination, maintenance of telomere integrity and meiosis. The MRN complex is involved in the repair of DNA double-strand breaks (DSBs) via homologous recombination (HR), an error-free mechanism which primarily occurs during S and G2 phases. The complex (1) mediates the end resection of damaged DNA, which generates proper single-stranded DNA, a key initial steps in HR, and is (2) required for the recruitment of other repair factors and efficient activation of ATM and ATR upon DNA damage. The MRN complex possesses single-strand endonuclease activity and double-strand-specific 3'-5' exonuclease activity, which are provided by MRE11, to initiate end resection, which is required for single-strand invasion and recombination. Within the complex, RAD50 is both required to bind DNA ends and hold them in close proximity and regulate the activity of MRE11. RAD50 provides an ATP-dependent control of MRE11 by positioning DNA ends into the MRE11 active site: ATP-binding induces a large structural change from an open form with accessible MRE11 nuclease sites into a closed form. The MRN complex is also required for DNA damage signaling via activation of the ATM and ATR kinases: the nuclease activity of MRE11 is not required to activate ATM and ATR. The MRN complex is also required for the processing of R-loops. In telomeres the MRN complex may modulate t-loop formation. This is DNA repair protein RAD50 from Homo sapiens (Human).